Consider the following 227-residue polypeptide: Thiamine-phosphate synthase (227 aa).

4-amino-2-methyl-5-(diphosphooxymethyl)pyrimidine contacts are provided by residues 46–50 and asparagine 87; that span reads QLRDK. Residues aspartate 88 and aspartate 107 each coordinate Mg(2+). Serine 126 serves as a coordination point for 4-amino-2-methyl-5-(diphosphooxymethyl)pyrimidine. 152–154 contacts 2-[(2R,5Z)-2-carboxy-4-methylthiazol-5(2H)-ylidene]ethyl phosphate; it reads TPT. 4-amino-2-methyl-5-(diphosphooxymethyl)pyrimidine is bound at residue lysine 155. Glycine 183 provides a ligand contact to 2-[(2R,5Z)-2-carboxy-4-methylthiazol-5(2H)-ylidene]ethyl phosphate.

This sequence belongs to the thiamine-phosphate synthase family. Requires Mg(2+) as cofactor.

The catalysed reaction is 2-[(2R,5Z)-2-carboxy-4-methylthiazol-5(2H)-ylidene]ethyl phosphate + 4-amino-2-methyl-5-(diphosphooxymethyl)pyrimidine + 2 H(+) = thiamine phosphate + CO2 + diphosphate. It catalyses the reaction 2-(2-carboxy-4-methylthiazol-5-yl)ethyl phosphate + 4-amino-2-methyl-5-(diphosphooxymethyl)pyrimidine + 2 H(+) = thiamine phosphate + CO2 + diphosphate. The enzyme catalyses 4-methyl-5-(2-phosphooxyethyl)-thiazole + 4-amino-2-methyl-5-(diphosphooxymethyl)pyrimidine + H(+) = thiamine phosphate + diphosphate. Its pathway is cofactor biosynthesis; thiamine diphosphate biosynthesis; thiamine phosphate from 4-amino-2-methyl-5-diphosphomethylpyrimidine and 4-methyl-5-(2-phosphoethyl)-thiazole: step 1/1. Condenses 4-methyl-5-(beta-hydroxyethyl)thiazole monophosphate (THZ-P) and 2-methyl-4-amino-5-hydroxymethyl pyrimidine pyrophosphate (HMP-PP) to form thiamine monophosphate (TMP). This chain is Thiamine-phosphate synthase, found in Mycolicibacterium smegmatis (strain ATCC 700084 / mc(2)155) (Mycobacterium smegmatis).